A 454-amino-acid polypeptide reads, in one-letter code: tRNA modification GTPase MnmE (454 aa).

Positions 23, 80, and 120 each coordinate (6S)-5-formyl-5,6,7,8-tetrahydrofolate. The 162-residue stretch at 216–377 folds into the TrmE-type G domain; the sequence is GMKVVIAGRP…LRNNLKQSMG (162 aa). K(+) is bound at residue Asn-226. GTP is bound by residues 226 to 231, 245 to 251, 270 to 273, 335 to 338, and 358 to 360; these read NAGKSS, TDIAGTT, DTAG, NKAD, and SAR. Ser-230 contacts Mg(2+). Residues Thr-245, Ile-247, and Thr-250 each coordinate K(+). Thr-251 provides a ligand contact to Mg(2+). Residue Lys-454 coordinates (6S)-5-formyl-5,6,7,8-tetrahydrofolate.

This sequence belongs to the TRAFAC class TrmE-Era-EngA-EngB-Septin-like GTPase superfamily. TrmE GTPase family. Homodimer. Heterotetramer of two MnmE and two MnmG subunits. Requires K(+) as cofactor.

The protein resides in the cytoplasm. Its function is as follows. Exhibits a very high intrinsic GTPase hydrolysis rate. Involved in the addition of a carboxymethylaminomethyl (cmnm) group at the wobble position (U34) of certain tRNAs, forming tRNA-cmnm(5)s(2)U34. This chain is tRNA modification GTPase MnmE, found in Salmonella paratyphi A (strain ATCC 9150 / SARB42).